Reading from the N-terminus, the 420-residue chain is MVEKRIQPLARDAMAYVLAGGRGSRLKELTDRRAKPAVYFGGKARIIDFALSNALNSGIRRIGVATQYKAHSLIRHMQRGWNFFRPERNESFDILPASQRVSETQWYEGTADAVYQNIDIIEDYGVEYMVILAGDHVYKMDYEWMLQQHVDSGADVTIGCLEVPRMEATGFGVMHVNDKDEILAFVEKPADPPGIPDKPDFALASMGIYVFHTKFLLDALRRDAADPNSSRDFGKDIIPYIVQNGKAVAHRFAKSCVRSDFEHEPYWRDVGTIDAYWQANIDLTAIVPELDIYDKSWPIWTYAEITPPAKFVHDDEDRRGSATSSVVSGDCIISGASLNKSLLFTGVRANSFSKLEGAVILPNVKIGRRAQLKNVVIDHGVVIPEGLVVGEDPELDAKRFRRTESGICLITQPMIDKLDI.

Residues Y107, G172, E187 to K188, and S205 each bind alpha-D-glucose 1-phosphate.

This sequence belongs to the bacterial/plant glucose-1-phosphate adenylyltransferase family. Homotetramer.

It carries out the reaction alpha-D-glucose 1-phosphate + ATP + H(+) = ADP-alpha-D-glucose + diphosphate. The protein operates within glycan biosynthesis; glycogen biosynthesis. Involved in the biosynthesis of ADP-glucose, a building block required for the elongation reactions to produce glycogen. Catalyzes the reaction between ATP and alpha-D-glucose 1-phosphate (G1P) to produce pyrophosphate and ADP-Glc. In Rhizobium etli (strain CIAT 652), this protein is Glucose-1-phosphate adenylyltransferase.